Reading from the N-terminus, the 77-residue chain is EMBRYO SURROUNDING FACTOR 1-like protein 6 (77 aa).

An N-terminal signal peptide occupies residues 1–25; that stretch reads MSPSHFAILFIIVISLVPLHGYANG. 4 disulfides stabilise this stretch: cysteine 38/cysteine 53, cysteine 43/cysteine 72, cysteine 51/cysteine 68, and cysteine 54/cysteine 61.

This sequence belongs to the MEG family.

The chain is EMBRYO SURROUNDING FACTOR 1-like protein 6 (ESFL6) from Arabidopsis thaliana (Mouse-ear cress).